The following is a 508-amino-acid chain: Hydroxymethylglutaryl-CoA synthase, mitochondrial (508 aa).

The transit peptide at 1–37 directs the protein to the mitochondrion; that stretch reads MQRLLAPARRVLQVKRAMQETSLTPAHLLSAAQQRFS. The residue at position 52 (Lys-52) is an N6-succinyllysine. Residues Glu-80 and Ala-81 each contribute to the (3S)-3-hydroxy-3-methylglutaryl-CoA site. Residues Lys-83 and Lys-118 each carry the N6-acetyllysine; alternate modification. N6-succinyllysine; alternate occurs at positions 83 and 118. The Proton donor/acceptor role is filled by Glu-132. (3S)-3-hydroxy-3-methylglutaryl-CoA is bound by residues Cys-166, Asn-204, and Thr-208. The active-site Acyl-thioester intermediate is Cys-166. Position 221 is an N6-succinyllysine (Lys-221). An N6-acetyllysine modification is found at Lys-243. An N6-acetyllysine; alternate modification is found at Lys-256. N6-succinyllysine; alternate is present on Lys-256. Ser-258 and His-301 together coordinate (3S)-3-hydroxy-3-methylglutaryl-CoA. His-301 acts as the Proton donor/acceptor in catalysis. Lys-306 carries the N6-acetyllysine modification. Lys-310 contributes to the (3S)-3-hydroxy-3-methylglutaryl-CoA binding site. Residues Lys-310 and Lys-327 each carry the N6-acetyllysine; alternate modification. 2 positions are modified to N6-succinyllysine; alternate: Lys-310 and Lys-327. An N6-succinyllysine modification is found at Lys-333. Residues Lys-342, Lys-350, Lys-354, and Lys-358 each carry the N6-acetyllysine; alternate modification. N6-succinyllysine; alternate occurs at positions 342, 350, 354, and 358. (3S)-3-hydroxy-3-methylglutaryl-CoA is bound by residues Asn-380 and Ser-414. Lys-427 bears the N6-acetyllysine mark. Ser-433 carries the phosphoserine modification. Lys-437 is subject to N6-acetyllysine. Position 440 is a phosphoserine (Ser-440). An N6-acetyllysine; alternate modification is found at Lys-447. Lys-447 carries the N6-succinyllysine; alternate modification. The residue at position 456 (Ser-456) is a Phosphoserine. Lys-473 is modified (N6-acetyllysine; alternate). Lys-473 is modified (N6-succinyllysine; alternate). Ser-477 is modified (phosphoserine).

Belongs to the thiolase-like superfamily. HMG-CoA synthase family. Homodimer. In terms of processing, acetylation of Lys-427 is observed in liver mitochondria from fasted mice but not from fed mice. Succinylated. Desuccinylated by SIRT5. Succinylation, at least at Lys-83 and Lys-310, inhibits the enzymatic activity. In terms of tissue distribution, liver and kidney.

The protein localises to the mitochondrion. It carries out the reaction acetoacetyl-CoA + acetyl-CoA + H2O = (3S)-3-hydroxy-3-methylglutaryl-CoA + CoA + H(+). It functions in the pathway metabolic intermediate biosynthesis; (R)-mevalonate biosynthesis; (R)-mevalonate from acetyl-CoA: step 2/3. In terms of biological role, catalyzes the first irreversible step in ketogenesis, condensing acetyl-CoA to acetoacetyl-CoA to form HMG-CoA, which is converted by HMG-CoA reductase (HMGCR) into mevalonate. This is Hydroxymethylglutaryl-CoA synthase, mitochondrial (Hmgcs2) from Mus musculus (Mouse).